A 676-amino-acid polypeptide reads, in one-letter code: DNA ligase (676 aa).

NAD(+)-binding positions include 32-36, 81-82, and glutamate 113; these read DAEYD and SL. Lysine 115 (N6-AMP-lysine intermediate) is an active-site residue. 4 residues coordinate NAD(+): arginine 136, glutamate 173, lysine 291, and lysine 315. Cysteine 409, cysteine 412, cysteine 427, and cysteine 433 together coordinate Zn(2+). In terms of domain architecture, BRCT spans 595 to 676; it reads SEKTYFFNKK…LNSLIRIKEQ (82 aa).

This sequence belongs to the NAD-dependent DNA ligase family. LigA subfamily. Requires Mg(2+) as cofactor. The cofactor is Mn(2+).

The enzyme catalyses NAD(+) + (deoxyribonucleotide)n-3'-hydroxyl + 5'-phospho-(deoxyribonucleotide)m = (deoxyribonucleotide)n+m + AMP + beta-nicotinamide D-nucleotide.. Its function is as follows. DNA ligase that catalyzes the formation of phosphodiester linkages between 5'-phosphoryl and 3'-hydroxyl groups in double-stranded DNA using NAD as a coenzyme and as the energy source for the reaction. It is essential for DNA replication and repair of damaged DNA. This is DNA ligase from Buchnera aphidicola subsp. Acyrthosiphon pisum (strain Tuc7).